The primary structure comprises 363 residues: Peptide chain release factor 1 (363 aa).

Q237 carries the post-translational modification N5-methylglutamine. Residues 284–296 (EDEKRRSAEESTR) show a composition bias toward basic and acidic residues. The disordered stretch occupies residues 284–306 (EDEKRRSAEESTRRSLVASGDRS).

Belongs to the prokaryotic/mitochondrial release factor family. Methylated by PrmC. Methylation increases the termination efficiency of RF1.

Its subcellular location is the cytoplasm. In terms of biological role, peptide chain release factor 1 directs the termination of translation in response to the peptide chain termination codons UAG and UAA. This Shewanella putrefaciens (strain CN-32 / ATCC BAA-453) protein is Peptide chain release factor 1.